Here is a 610-residue protein sequence, read N- to C-terminus: Glutamine--fructose-6-phosphate aminotransferase [isomerizing] (610 aa).

C2 functions as the Nucleophile; for GATase activity in the catalytic mechanism. One can recognise a Glutamine amidotransferase type-2 domain in the interval 2–218 (CGIVGAVAQR…EGDVAEITRR (217 aa)). SIS domains are found at residues 286-426 (AADI…EQGR) and 459-600 (LATD…VDQP). K605 serves as the catalytic For Fru-6P isomerization activity.

In terms of assembly, homodimer.

The protein localises to the cytoplasm. The enzyme catalyses D-fructose 6-phosphate + L-glutamine = D-glucosamine 6-phosphate + L-glutamate. In terms of biological role, catalyzes the first step in hexosamine metabolism, converting fructose-6P into glucosamine-6P using glutamine as a nitrogen source. The protein is Glutamine--fructose-6-phosphate aminotransferase [isomerizing] of Vibrio parahaemolyticus serotype O3:K6 (strain RIMD 2210633).